Reading from the N-terminus, the 224-residue chain is Uracil-DNA glycosylase (224 aa).

The Proton acceptor role is filled by aspartate 64.

It belongs to the uracil-DNA glycosylase (UDG) superfamily. UNG family.

The protein localises to the cytoplasm. It carries out the reaction Hydrolyzes single-stranded DNA or mismatched double-stranded DNA and polynucleotides, releasing free uracil.. In terms of biological role, excises uracil residues from the DNA which can arise as a result of misincorporation of dUMP residues by DNA polymerase or due to deamination of cytosine. In Geobacillus sp. (strain WCH70), this protein is Uracil-DNA glycosylase.